Reading from the N-terminus, the 1065-residue chain is Inversin (1065 aa).

ANK repeat units follow at residues 13-42 (SLASQVHAAAVNGDKGALQRLIVGNSALKD), 47-76 (FGRTPLMYCVLADRLDCADALLKAGADVNK), 80-110 (SQRTALHLAAQKGNYRFMKLLLTRRANWMQK), 113-144 (EEMTPLHLTTRHRSPKCLALLLKFMAPGEVDT), 148-177 (NKQTALHWSAYYNNPEHVKLLIKHDSNIGI), 181-213 (EGKIPLHWAANHKDPSAVHTVRCILDAAPTESL), 220-250 (EGRTPLHFAVADGNVTVVDVLTSYESCNITS), 254-283 (LFRTPLHWAALLGHAQIVHLLLERNKSGTI), 288-317 (QGATPLHYAAQSNFAETVKVFLKHPSVKDD), 321-350 (EGRTSFMWAAGKGSDDVLRTMLSLKSDIDI), 356-385 (YGGTALHAAALSGHVSTVKLLLENNAQVDA), 389-418 (MKHTPLFRACEMGHKDVIQTLIKGGARVDL), 422-451 (DGHSLLHWAALGGNADVCQILIENKINPNV), 455-484 (AGRTPLQCAAYGGYINCMAVLMENNADPNI), 488-517 (EGRTALHWSCNNGYLDAIKLLLDFAAFPNQ), and 523-553 (ERYTPLDYALLGERHEVIQFMLEHGALSIAA). At N75 the chain carries 3-hydroxyasparagine. Positions 490 to 498 (RTALHWSCN) match the D-box 1 motif. In terms of domain architecture, IQ 1 spans 555-584 (QDIAAFKIQAVYKGYKVRKAFRDRKNLLMK). Positions 589-616 (RKDAAAKKREEENKRKEAEQQKGRRSPD) are enriched in basic and acidic residues. Disordered stretches follow at residues 589–833 (RKDA…TPRN) and 847–886 (HLPQSTEELRSGARRLETSTLSEDFQVSKETDPAPGPLSG). Residues 627-640 (PSTQDVPSRQSRAP) are compositionally biased toward polar residues. S661 is subject to Phosphoserine. A compositionally biased stretch (polar residues) spans 677 to 686 (SSDLQGTNSR). Composition is skewed to basic and acidic residues over residues 687–697 (RPNETAREHSK), 706–715 (RPNEGSDGSR), 723–736 (EKSRGETAGDERCA), 752–762 (GPDEKGEDSRR), 770–786 (HDSHWKPSRRHDTEPKA), and 853–863 (EELRSGARRLE). The short motif at 909–917 (RKELFRKKN) is the D-box 2 element. The IQ 2 domain occupies 916–945 (KNKAAAVIQRAWRSYQLRKHLSHLRHMKQL). The tract at residues 976–999 (TTAVSKAPKSPSKGTSGTKSTKHS) is disordered. The span at 983–994 (PKSPSKGTSGTK) shows a compositional bias: low complexity.

As to quaternary structure, binds calmodulin via its IQ domains. Interacts with APC2. Interacts with alpha-, beta-, and gamma-catenin. Interacts with N-cadherin (CDH2). Interacts with microtubules. Interacts with NPHP1. Interacts with DVL1, PRICKLE (PRICKLE1 or PRICKLE2) and Strabismus (VANGL1 or VANGL2). Interacts with IQCB1; the interaction likely requires additional interactors. Component of a complex containing at least ANKS6, INVS, NEK8 and NPHP3. ANKS6 may organize complex assembly by linking INVS and NPHP3 to NEK8 and INVS may target the complex to the proximal ciliary axoneme. May be ubiquitinated via its interaction with APC2. Post-translationally, hydroxylated at Asn-75, most probably by HIF1AN. Widely expressed. Strongly expressed in the primary cilia of renal tubular cells.

Its subcellular location is the cytoplasm. The protein resides in the cytoskeleton. It is found in the spindle. The protein localises to the membrane. It localises to the nucleus. Its subcellular location is the cell projection. The protein resides in the cilium. Its function is as follows. Required for normal renal development and establishment of left-right axis. Probably acts as a molecular switch between different Wnt signaling pathways. Inhibits the canonical Wnt pathway by targeting cytoplasmic disheveled (DVL1) for degradation by the ubiquitin-proteasome. This suggests that it is required in renal development to oppose the repression of terminal differentiation of tubular epithelial cells by Wnt signaling. Involved in the organization of apical junctions in kidney cells together with NPHP1, NPHP4 and RPGRIP1L/NPHP8. Does not seem to be strictly required for ciliogenesis. The sequence is that of Inversin (INVS) from Homo sapiens (Human).